We begin with the raw amino-acid sequence, 863 residues long: MQELYNPSEIEALVQKHWQEHKTFEVTEDESKEKFYCLSMFPYPSGRLHMGHVRNYTIGDVVARYQRLQGKNVLQPIGWDSFGLPAENAAINNKTSPAPWTYENIDYMKNQLKLLGFGYDWSREIATCTPEYYRWEQWFFTKLYEKGMVYKKTSSVNWCPNDETVLANEQVQDGCCWRCDTPVIQKEIPQWFIKITDYAEELLNDIDTLDGWPEQVKAMQRNWIGRSEGIEMTFKVKDSEQSFDIYTTRPDTLMGVTYVAIAAGHPLAEQAASTNPALAAFIEECKNADTTEAAMASMEKKGVATGLEAVHPISGKLVPIWVANFVLMNYGTGAVMSVPAHDQRDYEFAKAYGLEMQAVIKPADSEVDISKEAYTEKGVLFNSGTAFPELDGLEFQAAFDAIDARLTAEGKGKRQVNYRLRDWGVSRQRYWGAPIPMVTLADGTVMPTPEDQLPVILPEDVVMDGIQSPIKADKAWAETTVDGKPAFRETDTFDTFMESSWYYARYCSPHADEMLDPAKANYWLPVDQYIGGIEHACMHLLYFRFFHKLLRDAGLVNSNEPAKRLLTQGMVLADAYYYTNDKGARVWVSPLEAEVVEKDDKGRVVKAVDSQGNELVYTGMSKMSKSKNNGIDPQTMVEKYGADTVRLFMMFASPPELTLEWQESGVEGAHRFIKRLWKLASDHVAAGPTEALDVSKLSSSQKALRRELHKTIAKVSDDIGRRQMFNTAVAAVMELMNHLSKAPQDSAQDRALLAEALSAVTRLLYPIIPHMSFTLWHELGNSNNIEDSRWPDVDEAALVEDSKLIVVQVNGKVRAKITVAADATKEAVEQLGLDDEHVQKHLEGLTVRKVIYVPGKLLSLVAN.

The 'HIGH' region signature appears at 42–52 (PYPSGRLHMGH). The 'KMSKS' region motif lies at 622-626 (KMSKS). K625 is a binding site for ATP.

The protein belongs to the class-I aminoacyl-tRNA synthetase family.

It localises to the cytoplasm. The enzyme catalyses tRNA(Leu) + L-leucine + ATP = L-leucyl-tRNA(Leu) + AMP + diphosphate. The polypeptide is Leucine--tRNA ligase (Shewanella denitrificans (strain OS217 / ATCC BAA-1090 / DSM 15013)).